The sequence spans 226 residues: tRNA (guanine-N(1)-)-methyltransferase (226 aa).

S-adenosyl-L-methionine contacts are provided by residues G112 and 132 to 137; that span reads IGDYVL.

Belongs to the RNA methyltransferase TrmD family. Homodimer.

Its subcellular location is the cytoplasm. It carries out the reaction guanosine(37) in tRNA + S-adenosyl-L-methionine = N(1)-methylguanosine(37) in tRNA + S-adenosyl-L-homocysteine + H(+). Its function is as follows. Specifically methylates guanosine-37 in various tRNAs. The chain is tRNA (guanine-N(1)-)-methyltransferase from Flavobacterium johnsoniae (strain ATCC 17061 / DSM 2064 / JCM 8514 / BCRC 14874 / CCUG 350202 / NBRC 14942 / NCIMB 11054 / UW101) (Cytophaga johnsonae).